The chain runs to 268 residues: Zinc transporter ZupT (268 aa).

Transmembrane regions (helical) follow at residues 5 to 25, 36 to 56, 75 to 95, 124 to 144, 157 to 177, 187 to 207, 211 to 231, and 248 to 268; these read ILFAFALTLFAGLSTGVGSLI, VLTISLGFSAGVMIYVAMIEI, VVTVLSFFAGIFLIALIDKLI, MGLFSAVAIGIHNFPEGLATF, IAVAIAIHNIPEGLAVSAPIF, FILSFLSGLAEPVGALIGYFL, FFSPSLFGVVFGAVAGIMVYI, and FAIGGVIAGMVVMAISLLLFT. Fe(2+)-binding residues include Asn-136 and Glu-139. The Zn(2+) site is built by Glu-139 and His-164. Fe(2+)-binding residues include Asn-165, Glu-168, and Glu-197. Glu-168 contributes to the Zn(2+) binding site.

Belongs to the ZIP transporter (TC 2.A.5) family. ZupT subfamily.

It is found in the cell membrane. The enzyme catalyses Zn(2+)(in) = Zn(2+)(out). Its function is as follows. Mediates zinc uptake. May also transport other divalent cations. This Chlorobium chlorochromatii (strain CaD3) protein is Zinc transporter ZupT.